The following is an 885-amino-acid chain: DNA mismatch repair protein MutS (885 aa).

626–633 (GPNMGGKS) provides a ligand contact to ATP.

The protein belongs to the DNA mismatch repair MutS family.

In terms of biological role, this protein is involved in the repair of mismatches in DNA. It is possible that it carries out the mismatch recognition step. This protein has a weak ATPase activity. This Burkholderia orbicola (strain MC0-3) protein is DNA mismatch repair protein MutS.